The following is a 642-amino-acid chain: Dihydrolipoyllysine-residue acetyltransferase component of pyruvate dehydrogenase complex, mitochondrial (642 aa).

The N-terminal 85 residues, 1-85, are a transit peptide targeting the mitochondrion; it reads MWRVCARRAR…LLGSPSRRSY (85 aa). The segment at 80–99 is disordered; it reads PSRRSYSLPPHQKVPLPSLS. 2 consecutive Lipoyl-binding domains span residues 90–166 and 217–293; these read HQKV…CITV and HMQI…CIIV. Ser99 is modified (phosphoserine). Residues Lys131 and Lys258 each carry the N6-lipoyllysine modification. The disordered stretch occupies residues 313-346; that stretch reads LKPQAAPPAPPPVAAVPPTPQPVAPTPSAAPAGP. Pro residues predominate over residues 317–337; sequence AAPPAPPPVAAVPPTPQPVAP. Positions 351–388 constitute a Peripheral subunit-binding (PSBD) domain; it reads FVSPLAKKLAAEKGIDLTQVKGTGPEGRIIKKDIDSFV. Arg456 lines the CoA pocket. The residue at position 461 (Lys461) is an N6-acetyllysine. Lys468 bears the N6-succinyllysine mark. CoA is bound at residue Ser470. Lys542 bears the N6-succinyllysine mark. 3 residues coordinate CoA: Ser561, Asn562, and Gly586. Catalysis depends on residues His615 and Asp619.

It belongs to the 2-oxoacid dehydrogenase family. Part of the pyruvate dehydrogenase complex (PDHc) that is a multi-enzyme complex composed of multiple copies of three enzymes, pyruvate dehydrogenase (subunits PDH1A and PDHB, E1 component), dihydrolipoamide acetyltransferase (DLAT, E2 component), and dihydrolipoamide dehydrogenase (DLD, E3 component) to which is added an additional protein the E3-binding protein (PDHX, E3BP). In terms of structural architecture, the E2 and E3BP components assemble into a 60meric central core with icosahedral symmetry. The central core is decorated with E1 and E3 proteins. Currently, two alternative models for the E2:E3BP stoichiometry are considered as being either 48:12 (E2(48)-E3BP(12)) or 40:20 (E2(40)-E3BP(20)). Interacts with PDK2 and PDK3. Interacts with SIRT4. Interacts with PDHB. Requires (R)-lipoate as cofactor. Post-translationally, delipoylated at Lys-131 and Lys-258 by SIRT4, delipoylation decreases the PHD complex activity.

It localises to the mitochondrion matrix. The enzyme catalyses N(6)-[(R)-dihydrolipoyl]-L-lysyl-[protein] + acetyl-CoA = N(6)-[(R)-S(8)-acetyldihydrolipoyl]-L-lysyl-[protein] + CoA. In terms of biological role, as part of the pyruvate dehydrogenase complex, catalyzes the transfers of an acetyl group to a lipoic acid moiety. The pyruvate dehydrogenase complex, catalyzes the overall conversion of pyruvate to acetyl-CoA and CO(2), and thereby links cytoplasmic glycolysis and the mitochondrial tricarboxylic acid (TCA) cycle. This Mus musculus (Mouse) protein is Dihydrolipoyllysine-residue acetyltransferase component of pyruvate dehydrogenase complex, mitochondrial.